A 406-amino-acid chain; its full sequence is Tryptophan synthase beta chain (406 aa).

Lys-97 bears the N6-(pyridoxal phosphate)lysine mark.

The protein belongs to the TrpB family. Tetramer of two alpha and two beta chains. Pyridoxal 5'-phosphate serves as cofactor.

The catalysed reaction is (1S,2R)-1-C-(indol-3-yl)glycerol 3-phosphate + L-serine = D-glyceraldehyde 3-phosphate + L-tryptophan + H2O. The protein operates within amino-acid biosynthesis; L-tryptophan biosynthesis; L-tryptophan from chorismate: step 5/5. The beta subunit is responsible for the synthesis of L-tryptophan from indole and L-serine. In Lacticaseibacillus paracasei (strain ATCC 334 / BCRC 17002 / CCUG 31169 / CIP 107868 / KCTC 3260 / NRRL B-441) (Lactobacillus paracasei), this protein is Tryptophan synthase beta chain.